The following is a 336-amino-acid chain: tRNA N6-adenosine threonylcarbamoyltransferase (336 aa).

Residues H111 and H115 each contribute to the Fe cation site. Substrate contacts are provided by residues L134 to G138, D167, G180, and N270. Position 298 (D298) interacts with Fe cation.

Belongs to the KAE1 / TsaD family. Fe(2+) is required as a cofactor.

It localises to the cytoplasm. The catalysed reaction is L-threonylcarbamoyladenylate + adenosine(37) in tRNA = N(6)-L-threonylcarbamoyladenosine(37) in tRNA + AMP + H(+). Its function is as follows. Required for the formation of a threonylcarbamoyl group on adenosine at position 37 (t(6)A37) in tRNAs that read codons beginning with adenine. Is involved in the transfer of the threonylcarbamoyl moiety of threonylcarbamoyl-AMP (TC-AMP) to the N6 group of A37, together with TsaE and TsaB. TsaD likely plays a direct catalytic role in this reaction. The chain is tRNA N6-adenosine threonylcarbamoyltransferase from Acinetobacter baumannii (strain SDF).